Here is a 28-residue protein sequence, read N- to C-terminus: Dermaseptin-H2 (28 aa).

This sequence belongs to the frog skin active peptide (FSAP) family. Dermaseptin subfamily. As to expression, expressed by the skin glands.

The protein localises to the secreted. Functionally, possesses a potent antimicrobial activity against Gram-positive and Gram-negative bacteria. Probably acts by disturbing membrane functions with its amphipathic structure. The protein is Dermaseptin-H2 of Pithecopus azureus (Orange-legged monkey tree frog).